The chain runs to 197 residues: Nucleoid occlusion factor SlmA (197 aa).

The region spanning 7 to 67 (INRREHILQC…GLIEFIEESL (61 aa)) is the HTH tetR-type domain. A DNA-binding region (H-T-H motif) is located at residues 30–49 (TTAKLAAEVGVSEAALYRHF). Residues 109-136 (DALLGENERLRSRISQLFAKIETHLKQI) adopt a coiled-coil conformation.

Belongs to the nucleoid occlusion factor SlmA family. In terms of assembly, homodimer. Interacts with FtsZ.

It is found in the cytoplasm. Its subcellular location is the nucleoid. In terms of biological role, required for nucleoid occlusion (NO) phenomenon, which prevents Z-ring formation and cell division over the nucleoid. Acts as a DNA-associated cell division inhibitor that binds simultaneously chromosomal DNA and FtsZ, and disrupts the assembly of FtsZ polymers. SlmA-DNA-binding sequences (SBS) are dispersed on non-Ter regions of the chromosome, preventing FtsZ polymerization at these regions. This chain is Nucleoid occlusion factor SlmA, found in Shewanella halifaxensis (strain HAW-EB4).